A 494-amino-acid polypeptide reads, in one-letter code: MLTSGLLLVAAVAFLSVLVLMSVWKQRKLSGKLPPGPTPLPFIGNFLQLNTEQMYNSLMKISQRYGPVFTIYLGPRRIVVLCGQEAVKEALVDQAEEFSGRGEQATFDWLFKGYGVVFSSGERAKQLRRFSIATLRDFGVGKRGIEERIQEEAGFLIDSFRKTNGAFIDPTFYLSRTVSNVISSIVFGDRFDYEDKEFLSLLRMMLGSFQFTATSMGQLYEMFSSVMKHLPGPQQQAFKELQGLEDFITKKVEHNQRTLDPNSPRDFIDSFLIRMLEEKKNPNTEFYMKNLVLTTLNLFFAGTETVSTTLRYGFLLLMKHPDIEAKVHEEIDRVIGRNRQPKYEDRMKMPYTEAVIHEIQRFADMIPMGLARRVTKDTKFRDFLLPKGTEVFPMLGSVLKDPKFFSNPKDFNPKHFLDDKGQFKKNDAFVPFSIGKRYCFGEGLARMELFLFLTNIMQNFHFKSTQAPQDIDVSPRLVGFATIPPTYTMSFLSR.

Phosphoserine is present on Ser-131. Position 379 is an N6-acetyllysine (Lys-379). Position 439 (Cys-439) interacts with heme.

Belongs to the cytochrome P450 family. It depends on heme as a cofactor. As to expression, liver, with a strong circadian rhythmicity. Circadian expression is regulated by DBP.

It is found in the endoplasmic reticulum membrane. It localises to the microsome membrane. The enzyme catalyses an organic molecule + reduced [NADPH--hemoprotein reductase] + O2 = an alcohol + oxidized [NADPH--hemoprotein reductase] + H2O + H(+). Functionally, exhibits a high coumarin 7-hydroxylase activity. The protein is Cytochrome P450 2A5 (Cyp2a5) of Mus musculus (Mouse).